A 1342-amino-acid chain; its full sequence is MVYSYTEKKRIRKDFGKRPQVLDVPYLLSIQLDSFQKFIEQDPEGQYGLEAAFRSVFPIQSYSGNSELQYVSYRLGEPVFDVQECQIRGVTYSAPLRVKLRLVIYEREAPEGTVKDIKEQEVYMGEIPLMTDNGTFVINGTERVIVSQLHRSPGVFFDSDKGKTHSSGKVLYNARIIPYRGSWLDFEFDPKDNLFVRIDRRRKLPATIILRALNYTTEQILDLFFEKVVFEIRDNKLQMELIPERLRGETASFDIEANGKVYVEKGRRITARHIRQLEKDDIKHIEVPVEYIAGKVVSKDYVDESTGELICAANMELSLDLLAKLSQSGHKRIETLFTNDLDHGPYISETVRVDPTNDRLSALVEIYRMMRPGEPPTREAAESLFENLFFSEDRYDLSAVGRMKFNRSLLRDEIEGSGILSKDDIIDVMKKLIDIRNGKGEVDDIDHLGNRRIRSVGEMAENQFRVGLVRVERAVKERLSLGDLDTLMPQDMINAKPISAAVKEFFGSSQLSQFMDQNNPLSEITHKRRISALGPGGLTRERAGFEVRDVHPTHYGRVCPIETPEGPNIGLINSLSVYAQTNEYGFLETPYRRVVDGVVTDEIHYLSAIEEGNYVIAQANSNLDDEGHFVEDLVTCRSKGESSLFSRDQVDYMDVSTQQVVSVGASLIPFLEHDDANRALMGANMQRQAVPTLRADKPLVGTGMERAVAVDSGVTAVAKRGGTVQYVDASRIVIKVNEDEMYPGEAGIDIYNLTKYTRSNQNTCINQMPCVSLGEPVERGDVLADGPSTDLGELALGQNMRVAFMPWNGYNFEDSILVSERVVQEDRFTTIHIQELACVSRDTKLGPEEITADIPNVGEAALSKLDESGIVYIGAEVTGGDILVGKVTPKGETQLTPEEKLLRAIFGEKASDVKDSSLRVPNGVSGTVIDVQVFTRDGVEKDKRALEIEEMQLKQAKKDLSEELQILEAGLFSRIRAVLVSSGVEAEKLDKLPRDRWLELGLTDEEKQNQLEQLAEQYDELKHEFEKKLEAKRRKITQGDDLAPGVLKIVKVYLAVKRRIQPGDKMAGRHGNKGVISKINPIEDMPYDENGTPVDIVLNPLGVPSRMNIGQILETHLGMAAKGIGDKINAMLKQQQEVAKLREFIQRAYDLGADVRQKVDLSTFSDDEVLRLAENLRKGMPIATPVFDGAKEAEIKELLKLGDLPTSGQITLFDGRTGEQFERPVTVGYMYMLKLNHLVDDKMHARSTGSYSLVTQQPLGGKAQFGGQRFGEMEVWALEAYGAAYTLQEMLTVKSDDVNGRTKMYKNIVDGNHQMEPGMPESFNVLLKEIRSLGINIELEDE.

It belongs to the RNA polymerase beta chain family. As to quaternary structure, the RNAP catalytic core consists of 2 alpha, 1 beta, 1 beta' and 1 omega subunit. When a sigma factor is associated with the core the holoenzyme is formed, which can initiate transcription.

The enzyme catalyses RNA(n) + a ribonucleoside 5'-triphosphate = RNA(n+1) + diphosphate. In terms of biological role, DNA-dependent RNA polymerase catalyzes the transcription of DNA into RNA using the four ribonucleoside triphosphates as substrates. The sequence is that of DNA-directed RNA polymerase subunit beta from Salmonella typhimurium (strain LT2 / SGSC1412 / ATCC 700720).